The chain runs to 207 residues: LexA repressor (207 aa).

The segment at residues 28-48 (RAEIASRLGFKSANAAEEHLK) is a DNA-binding region (H-T-H motif). Residues serine 124 and lysine 161 each act as for autocatalytic cleavage activity in the active site.

This sequence belongs to the peptidase S24 family. In terms of assembly, homodimer.

It carries out the reaction Hydrolysis of Ala-|-Gly bond in repressor LexA.. Represses a number of genes involved in the response to DNA damage (SOS response), including recA and lexA. In the presence of single-stranded DNA, RecA interacts with LexA causing an autocatalytic cleavage which disrupts the DNA-binding part of LexA, leading to derepression of the SOS regulon and eventually DNA repair. The sequence is that of LexA repressor from Shewanella amazonensis (strain ATCC BAA-1098 / SB2B).